We begin with the raw amino-acid sequence, 476 residues long: Sulfate adenylyltransferase subunit 1 (476 aa).

The region spanning 24-243 is the tr-type G domain; the sequence is KSLLRFLTCG…VDVEKEKEAG (220 aa). The interval 33 to 40 is G1; the sequence is GSVDDGKS. A GTP-binding site is contributed by 33-40; the sequence is GSVDDGKS. Residues 91–95 are G2; the sequence is GITID. Positions 112–115 are G3; sequence DTPG. GTP is bound by residues 112–116 and 167–170; these read DTPGH and NKMD. Residues 167–170 are G4; sequence NKMD. Residues 205-207 are G5; sequence SAL.

This sequence belongs to the TRAFAC class translation factor GTPase superfamily. Classic translation factor GTPase family. CysN/NodQ subfamily. As to quaternary structure, heterodimer composed of CysD, the smaller subunit, and CysN.

It catalyses the reaction sulfate + ATP + H(+) = adenosine 5'-phosphosulfate + diphosphate. The protein operates within sulfur metabolism; hydrogen sulfide biosynthesis; sulfite from sulfate: step 1/3. In terms of biological role, with CysD forms the ATP sulfurylase (ATPS) that catalyzes the adenylation of sulfate producing adenosine 5'-phosphosulfate (APS) and diphosphate, the first enzymatic step in sulfur assimilation pathway. APS synthesis involves the formation of a high-energy phosphoric-sulfuric acid anhydride bond driven by GTP hydrolysis by CysN coupled to ATP hydrolysis by CysD. In Vibrio vulnificus (strain YJ016), this protein is Sulfate adenylyltransferase subunit 1.